Reading from the N-terminus, the 245-residue chain is Probable phosphatase CKO_02035 (245 aa).

Zn(2+)-binding residues include histidine 7, histidine 9, histidine 15, histidine 40, glutamate 73, histidine 101, histidine 131, aspartate 192, and histidine 194.

This sequence belongs to the PHP family. Homotrimer. The cofactor is Zn(2+).

The sequence is that of Probable phosphatase CKO_02035 from Citrobacter koseri (strain ATCC BAA-895 / CDC 4225-83 / SGSC4696).